The chain runs to 352 residues: Putative KilA-N domain-containing protein 006L (352 aa).

Residues 15 to 123 form the KilA-N domain; sequence TFYKGLFGDF…DKCNNIIINY (109 aa). The stretch at 129–236 forms a coiled coil; sequence KTMDKKTLQS…KIDNIQNKLE (108 aa).

This sequence belongs to the IIV-6 006L/238R/313L/468L family.

In Acheta domesticus (House cricket), this protein is Putative KilA-N domain-containing protein 006L.